A 467-amino-acid polypeptide reads, in one-letter code: tRNA-2-methylthio-N(6)-dimethylallyladenosine synthase (467 aa).

The segment at 1 to 20 (MSDDTTQIEPAMAQETSPRA) is disordered. The region spanning 23 to 143 (RKVFVKTYGC…LPNALARVRG (121 aa)) is the MTTase N-terminal domain. [4Fe-4S] cluster contacts are provided by Cys32, Cys68, Cys106, Cys184, Cys188, and Cys191. In terms of domain architecture, Radical SAM core spans 170–402 (RKRGVSAFLT…QALLSAQQYA (233 aa)). The region spanning 405–467 (DSMIGRKMDV…TNSLIAQKLA (63 aa)) is the TRAM domain.

It belongs to the methylthiotransferase family. MiaB subfamily. Monomer. It depends on [4Fe-4S] cluster as a cofactor.

The protein resides in the cytoplasm. It carries out the reaction N(6)-dimethylallyladenosine(37) in tRNA + (sulfur carrier)-SH + AH2 + 2 S-adenosyl-L-methionine = 2-methylsulfanyl-N(6)-dimethylallyladenosine(37) in tRNA + (sulfur carrier)-H + 5'-deoxyadenosine + L-methionine + A + S-adenosyl-L-homocysteine + 2 H(+). Catalyzes the methylthiolation of N6-(dimethylallyl)adenosine (i(6)A), leading to the formation of 2-methylthio-N6-(dimethylallyl)adenosine (ms(2)i(6)A) at position 37 in tRNAs that read codons beginning with uridine. This chain is tRNA-2-methylthio-N(6)-dimethylallyladenosine synthase, found in Brucella canis (strain ATCC 23365 / NCTC 10854 / RM-666).